The chain runs to 711 residues: GDNF-inducible zinc finger protein 1 (711 aa).

A BTB domain is found at 31 to 103 (CDVTVSVEYQ…VYTAKVQVEE (73 aa)). The span at 153–168 (SGSQVSAAPAPRASVA) shows a compositional bias: low complexity. Disordered stretches follow at residues 153–220 (SGSQ…PKIR) and 243–312 (RLRE…EGEK). Basic and acidic residues-rich tracts occupy residues 197 to 212 (PPKK…KEVV), 243 to 252 (RLREQQKTAE), and 265 to 277 (SPDR…EQVS). Positions 298-309 (EEEEEEEEEDEE) are enriched in acidic residues. C2H2-type zinc fingers lie at residues 317-340 (FKCS…KHRH), 348-371 (YRCD…RHVH), 377-400 (FPCE…LQVH), 407-429 (HRCG…ERTH), 435-457 (YGCT…MRIH), 463-485 (FVCD…KRCH), 491-513 (FMCE…NRIH), 519-541 (FKCE…IKVH), 547-569 (YCCD…RRIH), and 575-597 (FMCN…TSIH). The residue at position 613 (serine 613) is a Phosphoserine.

This sequence belongs to the krueppel C2H2-type zinc-finger protein family. In terms of assembly, interacts with NCL. As to expression, expressed in adult brain, heart, skeletal muscle, kidney and liver. Also detected in fetal brain and kidney, and at lower levels in fetal lung and liver.

The protein localises to the cytoplasm. It is found in the nucleus. Its subcellular location is the nucleoplasm. It localises to the nucleolus. Its function is as follows. Transcriptional repressor that binds the GZF1 responsive element (GRE) (consensus: 5'-TGCGCN[TG][CA]TATA-3'). May be regulating VSX2/HOX10 expression. The chain is GDNF-inducible zinc finger protein 1 from Homo sapiens (Human).